A 102-amino-acid polypeptide reads, in one-letter code: uncharacterized protein (102 aa).

This is an uncharacterized protein from Bacillus subtilis (strain 168).